A 236-amino-acid polypeptide reads, in one-letter code: Small ribosomal subunit protein uS2c (236 aa).

The protein belongs to the universal ribosomal protein uS2 family.

It localises to the plastid. The protein resides in the chloroplast. The protein is Small ribosomal subunit protein uS2c (rps2) of Gossypium barbadense (Sea Island cotton).